A 453-amino-acid chain; its full sequence is Ubiquitin-associated protein 1 (453 aa).

One can recognise a UMA domain in the interval 19 to 65 (LDDVPFKLNEKFRCPSKVGLPIGFCLSDCNAILSDLQYDFNLERRTV). Residues 83-93 (EAIRTDSESER) are compositionally biased toward basic and acidic residues. 3 disordered regions span residues 83–119 (EAIRTDSESERQAASQDAEVGLVGGKKARPSDEQDIV), 189–223 (LQSQPQSSVSPPQLPPAEHRPVSPSTTPPLQAKTG), and 260–335 (FPKL…AGTT). Residues 189–199 (LQSQPQSSVSP) are compositionally biased toward low complexity. The span at 285–328 (NLSNGTPPSLQRTASNNNTTLPQEQPVFAQNGTPKQSNPVTVTS) shows a compositional bias: polar residues. 2 consecutive UBA domains span residues 340 to 381 (SPSE…LFTH) and 403 to 449 (GSEE…LMTR).

Component of an ESCRT-I complex (endosomal sorting complex required for transport I).

It localises to the cytoplasm. Its subcellular location is the cytosol. The protein localises to the endosome. Component of the ESCRT-I complex, a regulator of vesicular trafficking process. Binds to ubiquitinated cargo proteins and is required for the sorting of endocytic ubiquitinated cargos into multivesicular bodies (MVBs). This chain is Ubiquitin-associated protein 1, found in Danio rerio (Zebrafish).